We begin with the raw amino-acid sequence, 90 residues long: Small ribosomal subunit protein uS17 (90 aa).

It belongs to the universal ribosomal protein uS17 family. In terms of assembly, part of the 30S ribosomal subunit.

One of the primary rRNA binding proteins, it binds specifically to the 5'-end of 16S ribosomal RNA. The protein is Small ribosomal subunit protein uS17 of Burkholderia multivorans (strain ATCC 17616 / 249).